The sequence spans 501 residues: Aspartyl/glutamyl-tRNA(Asn/Gln) amidotransferase subunit B (501 aa).

The disordered stretch occupies residues 271 to 299; it reads VQETRHYQETDGSTSKGRPKETAEDYRYF. A compositionally biased stretch (basic and acidic residues) spans 288 to 299; that stretch reads RPKETAEDYRYF.

The protein belongs to the GatB/GatE family. GatB subfamily. Heterotrimer of A, B and C subunits.

It carries out the reaction L-glutamyl-tRNA(Gln) + L-glutamine + ATP + H2O = L-glutaminyl-tRNA(Gln) + L-glutamate + ADP + phosphate + H(+). The catalysed reaction is L-aspartyl-tRNA(Asn) + L-glutamine + ATP + H2O = L-asparaginyl-tRNA(Asn) + L-glutamate + ADP + phosphate + 2 H(+). In terms of biological role, allows the formation of correctly charged Asn-tRNA(Asn) or Gln-tRNA(Gln) through the transamidation of misacylated Asp-tRNA(Asn) or Glu-tRNA(Gln) in organisms which lack either or both of asparaginyl-tRNA or glutaminyl-tRNA synthetases. The reaction takes place in the presence of glutamine and ATP through an activated phospho-Asp-tRNA(Asn) or phospho-Glu-tRNA(Gln). This chain is Aspartyl/glutamyl-tRNA(Asn/Gln) amidotransferase subunit B, found in Corynebacterium diphtheriae (strain ATCC 700971 / NCTC 13129 / Biotype gravis).